Consider the following 125-residue polypeptide: Ribosome-binding factor A (125 aa).

This sequence belongs to the RbfA family. In terms of assembly, monomer. Binds 30S ribosomal subunits, but not 50S ribosomal subunits or 70S ribosomes.

The protein resides in the cytoplasm. One of several proteins that assist in the late maturation steps of the functional core of the 30S ribosomal subunit. Associates with free 30S ribosomal subunits (but not with 30S subunits that are part of 70S ribosomes or polysomes). Required for efficient processing of 16S rRNA. May interact with the 5'-terminal helix region of 16S rRNA. This chain is Ribosome-binding factor A, found in Xylella fastidiosa (strain 9a5c).